We begin with the raw amino-acid sequence, 105 residues long: MKFRPLHDRVVVRRVEEESKTAGGIIIPDSAQEKPSQGEVVAVGPGARGDDGKLVALDVKVGDRVIFGKWSGTEVKIDGEELLIMKESDIMGVLEGAASKKKAAA.

Belongs to the GroES chaperonin family. In terms of assembly, heptamer of 7 subunits arranged in a ring. Interacts with the chaperonin GroEL.

It localises to the cytoplasm. Its function is as follows. Together with the chaperonin GroEL, plays an essential role in assisting protein folding. The GroEL-GroES system forms a nano-cage that allows encapsulation of the non-native substrate proteins and provides a physical environment optimized to promote and accelerate protein folding. GroES binds to the apical surface of the GroEL ring, thereby capping the opening of the GroEL channel. This chain is Co-chaperonin GroES, found in Parvibaculum lavamentivorans (strain DS-1 / DSM 13023 / NCIMB 13966).